Reading from the N-terminus, the 316-residue chain is Acetaldehyde dehydrogenase (316 aa).

11-14 (SGNI) provides a ligand contact to NAD(+). Cys131 acts as the Acyl-thioester intermediate in catalysis. Residues 162 to 170 (SAGPGTRAN) and Asn289 contribute to the NAD(+) site.

Belongs to the acetaldehyde dehydrogenase family. As to quaternary structure, interacts with MhpE.

It carries out the reaction acetaldehyde + NAD(+) + CoA = acetyl-CoA + NADH + H(+). It participates in aromatic compound metabolism; 3-phenylpropanoate degradation. Functionally, catalyzes the conversion of acetaldehyde to acetyl-CoA, using NAD(+) and coenzyme A. Is the final enzyme in the meta-cleavage pathway for the degradation of aromatic compounds. This chain is Acetaldehyde dehydrogenase, found in Klebsiella pneumoniae (strain 342).